A 103-amino-acid chain; its full sequence is Signal recognition particle 19 kDa protein (103 aa).

This sequence belongs to the SRP19 family. In terms of assembly, part of the signal recognition particle protein translocation system, which is composed of SRP and FtsY. Archaeal SRP consists of a 7S RNA molecule of 300 nucleotides and two protein subunits: SRP54 and SRP19.

The protein localises to the cytoplasm. Its function is as follows. Involved in targeting and insertion of nascent membrane proteins into the cytoplasmic membrane. Binds directly to 7S RNA and mediates binding of the 54 kDa subunit of the SRP. This is Signal recognition particle 19 kDa protein from Methanopyrus kandleri (strain AV19 / DSM 6324 / JCM 9639 / NBRC 100938).